Reading from the N-terminus, the 975-residue chain is 26S proteasome non-ATPase regulatory subunit 1 (975 aa).

The tract at residues E272–S303 is disordered. PC repeat units follow at residues S393–P426, G431–H464, G465–E499, A500–I534, S536–Y569, G570–R605, A606–R638, G640–Q674, A675–S715, and G718–A748. Disordered regions lie at residues S832 to P882 and P922 to E975. Basic and acidic residues-rich tracts occupy residues D842 to S880 and V926 to Q935. Residues T944–T961 show a composition bias toward low complexity.

This sequence belongs to the proteasome subunit S1 family.

Its function is as follows. Acts as a regulatory subunit of the 26 proteasome which is involved in the ATP-dependent degradation of ubiquitinated proteins. The chain is 26S proteasome non-ATPase regulatory subunit 1 (psmD1) from Dictyostelium discoideum (Social amoeba).